Reading from the N-terminus, the 380-residue chain is MAPTMRKSHPLLKIINGSFIDLPTPANISAWWNFGWLLGVCVIVQIATGLFLAMHYTADTSLAFSSIAHICRDVNNGWLLRNLHANGASFFFICIYFHIGRGLYYGSYLYKETWNIGVILLFLVMATAFVGYVLPWGQMSFWGATVITNLLSAAPYIGPDLVQWIWGGFSVDNATLTRFFTFHFILPFIIAAMSMIHLLFLHQTGSSNPTGLNSNLDKVSFHPYFSFKDLLGFIILLGALAILSTFAPNLLGDPDNFTPANPLVTPPHIKPEWYFLFAYAILRSIPNKLGGVLALLLSIMVLFLMPIIHTSKLRSLMFRPAAKAFFWALIANTIILTWIGGQPVEDPFISIGQIASGLYFLIFVLIIPTLGLLENKLLKI.

Transmembrane regions (helical) follow at residues 34–54 (FGWLLGVCVIVQIATGLFLAM), 78–99 (WLLRNLHANGASFFFICIYFHI), 114–134 (WNIGVILLFLVMATAFVGYVL), and 179–199 (FFTFHFILPFIIAAMSMIHLL). Positions 84 and 98 each coordinate heme b. Residues His183 and His197 each contribute to the heme b site. His202 provides a ligand contact to a ubiquinone. A run of 4 helical transmembrane segments spans residues 227-247 (FKDLLGFIILLGALAILSTFA), 289-309 (LGGVLALLLSIMVLFLMPIIH), 321-341 (AAKAFFWALIANTIILTWIGG), and 348-368 (FISIGQIASGLYFLIFVLIIP).

It belongs to the cytochrome b family. In terms of assembly, the cytochrome bc1 complex contains 3 respiratory subunits (MT-CYB, CYC1 and UQCRFS1), 2 core proteins (UQCRC1 and UQCRC2) and probably 6 low-molecular weight proteins. Heme b serves as cofactor.

The protein localises to the mitochondrion inner membrane. Component of the ubiquinol-cytochrome c reductase complex (complex III or cytochrome b-c1 complex) that is part of the mitochondrial respiratory chain. The b-c1 complex mediates electron transfer from ubiquinol to cytochrome c. Contributes to the generation of a proton gradient across the mitochondrial membrane that is then used for ATP synthesis. In Rana dybowskii (Dybovsky's frog), this protein is Cytochrome b (mt-cyb).